The chain runs to 205 residues: Probable 3'-5' exonuclease KapD (205 aa).

Residues 6-173 enclose the Exonuclease domain; it reads LLIIDFEFTM…DDALTAYKLF (168 aa). Positions 10, 12, and 104 each coordinate Mg(2+). The Proton acceptor role is filled by E12. Residue E12 coordinates AMP. The active-site Proton acceptor is the H160. Residue H160 participates in AMP binding. Position 165 (D165) interacts with Mg(2+).

Mg(2+) is required as a cofactor.

Its function is as follows. Specifically inhibits the KinA pathway to sporulation. The chain is Probable 3'-5' exonuclease KapD (kapD) from Bacillus subtilis (strain 168).